Reading from the N-terminus, the 363-residue chain is Phosphoserine aminotransferase (363 aa).

R42 lines the L-glutamate pocket. Residues 76 to 77 (GR), W102, T156, D175, and Q198 contribute to the pyridoxal 5'-phosphate site. The residue at position 199 (K199) is an N6-(pyridoxal phosphate)lysine. Pyridoxal 5'-phosphate is bound at residue 240-241 (NT).

Belongs to the class-V pyridoxal-phosphate-dependent aminotransferase family. SerC subfamily. In terms of assembly, homodimer. Pyridoxal 5'-phosphate serves as cofactor.

It is found in the cytoplasm. It carries out the reaction O-phospho-L-serine + 2-oxoglutarate = 3-phosphooxypyruvate + L-glutamate. The catalysed reaction is 4-(phosphooxy)-L-threonine + 2-oxoglutarate = (R)-3-hydroxy-2-oxo-4-phosphooxybutanoate + L-glutamate. It participates in amino-acid biosynthesis; L-serine biosynthesis; L-serine from 3-phospho-D-glycerate: step 2/3. It functions in the pathway cofactor biosynthesis; pyridoxine 5'-phosphate biosynthesis; pyridoxine 5'-phosphate from D-erythrose 4-phosphate: step 3/5. Catalyzes the reversible conversion of 3-phosphohydroxypyruvate to phosphoserine and of 3-hydroxy-2-oxo-4-phosphonooxybutanoate to phosphohydroxythreonine. In Shewanella halifaxensis (strain HAW-EB4), this protein is Phosphoserine aminotransferase.